A 414-amino-acid polypeptide reads, in one-letter code: Putative competence-damage inducible protein (414 aa).

This sequence belongs to the CinA family.

In Moorella thermoacetica (strain ATCC 39073 / JCM 9320), this protein is Putative competence-damage inducible protein.